The primary structure comprises 501 residues: Aldehyde dehydrogenase, cytosolic 1 (501 aa).

An NAD(+)-binding site is contributed by 246-251 (GSTEVG). Residue E269 is the Proton acceptor of the active site. The Nucleophile role is filled by C303.

It belongs to the aldehyde dehydrogenase family. Homotetramer. As to expression, eye specific, with very high expression in the lens.

Its subcellular location is the cytoplasm. It catalyses the reaction an aldehyde + NAD(+) + H2O = a carboxylate + NADH + 2 H(+). It functions in the pathway alcohol metabolism; ethanol degradation; acetate from ethanol: step 2/2. Functionally, major component of the eye of elephant shrews, which in contrast to other mammals, possesses both a lens- and a non-lens class-1 aldehyde dehydrogenase 1. This eye-specific form is a structural protein of the lens and, in other part of the eye, serves as the major form of ALDH1. Can convert/oxidize retinaldehyde to retinoic acid. The chain is Aldehyde dehydrogenase, cytosolic 1 (ALDH1) from Elephantulus edwardii (Cape long-eared elephant shrew).